Consider the following 221-residue polypeptide: 7-cyano-7-deazaguanine synthase (221 aa).

Position 10–20 (10–20) interacts with ATP; the sequence is FSGGQDSTTCL. 4 residues coordinate Zn(2+): Cys186, Cys195, Cys198, and Cys201.

It belongs to the QueC family. Homodimer. Requires Zn(2+) as cofactor.

It catalyses the reaction 7-carboxy-7-deazaguanine + NH4(+) + ATP = 7-cyano-7-deazaguanine + ADP + phosphate + H2O + H(+). The protein operates within purine metabolism; 7-cyano-7-deazaguanine biosynthesis. Its function is as follows. Catalyzes the ATP-dependent conversion of 7-carboxy-7-deazaguanine (CDG) to 7-cyano-7-deazaguanine (preQ(0)). This is 7-cyano-7-deazaguanine synthase from Geobacillus kaustophilus (strain HTA426).